Consider the following 105-residue polypeptide: Large ribosomal subunit protein bL21 (105 aa).

It belongs to the bacterial ribosomal protein bL21 family. As to quaternary structure, part of the 50S ribosomal subunit. Contacts protein L20.

Functionally, this protein binds to 23S rRNA in the presence of protein L20. This Stenotrophomonas maltophilia (strain R551-3) protein is Large ribosomal subunit protein bL21.